Reading from the N-terminus, the 154-residue chain is MTKHVEIFTDGSCLGNPGPGGYGIVLRYKDVEKTLSKGYTLTTNNRMEMLAAVVALQTLKEPCRVTLTTDSQYVRQGITQWIHNWKKRGWKTADKKPVKNADLWQALDKETARHQVDWHWVKGHAGHRENEICDELARTAAENPTEEDTGYQPS.

The RNase H type-1 domain maps to 1 to 142 (MTKHVEIFTD…CDELARTAAE (142 aa)). Residues Asp-10, Glu-48, Asp-70, and Asp-134 each coordinate Mg(2+).

The protein belongs to the RNase H family. As to quaternary structure, monomer. Mg(2+) is required as a cofactor.

Its subcellular location is the cytoplasm. The catalysed reaction is Endonucleolytic cleavage to 5'-phosphomonoester.. In terms of biological role, endonuclease that specifically degrades the RNA of RNA-DNA hybrids. The polypeptide is Ribonuclease HI (Vibrio parahaemolyticus serotype O3:K6 (strain RIMD 2210633)).